The chain runs to 339 residues: Retroviral-like aspartic protease 1 (339 aa).

A propeptide spanning residues 1 to 188 is cleaved from the precursor; it reads MRNPGGPGWA…SEPEEILFAN (188 aa). A disordered region spans residues 34 to 53; sequence VPAPFNSSRQGKNTAQPTEP. The segment covering 38–53 has biased composition (polar residues); it reads FNSSRQGKNTAQPTEP. Asn39 is a glycosylation site (N-linked (GlcNAc...) asparagine). The chain crosses the membrane as a helical span at residues 55 to 75; sequence LSSVIAPTLFCAFLYLACVTA. A Peptidase A2 domain is found at 205-286; it reads VRFLVDSGAQ…AEEAIIGTDV (82 aa). Asp210 is an active-site residue. An N-linked (GlcNAc...) asparagine glycan is attached at Asn274. Residues 325–339 constitute a propeptide that is removed on maturation; sequence LIEEEEGSSAPEGSH.

Homodimer. In terms of processing, undergoes autocleavage which is necessary for activation of the protein. As to expression, highly expressed in stratified epithelia in skin, tongue, esophagus, forestomach and vagina. Also expressed in trachea, urinary bladder and thymus. Undetectable in simple epithelia. Within the epidermis, expressed exclusively in the granular layer (at protein level). Levels are elevated in benign skin tumors but are down-regulated in squamous cell carcinomas.

Its subcellular location is the membrane. Its function is as follows. Protease responsible for filaggrin processing, essential for the maintenance of a proper epidermis organization. In Mus musculus (Mouse), this protein is Retroviral-like aspartic protease 1.